A 209-amino-acid chain; its full sequence is Elongation factor Ts, chloroplastic (209 aa).

This sequence belongs to the EF-Ts family.

Its subcellular location is the plastid. It is found in the chloroplast. In terms of biological role, associates with the EF-Tu.GDP complex and induces the exchange of GDP to GTP. It remains bound to the aminoacyl-tRNA.EF-Tu.GTP complex up to the GTP hydrolysis stage on the ribosome. This Cyanidioschyzon merolae (strain NIES-3377 / 10D) (Unicellular red alga) protein is Elongation factor Ts, chloroplastic (tsf).